The following is a 259-amino-acid chain: Probable ATP-dependent transporter ycf16 (259 aa).

Positions 9–253 (LEVKNLKAQV…EIKGYDWLNE (245 aa)) constitute an ABC transporter domain. ATP is bound at residue 41 to 48 (GPNGSGKS).

The protein belongs to the ABC transporter superfamily. Ycf16 family.

The protein resides in the plastid. Its subcellular location is the cyanelle. This is Probable ATP-dependent transporter ycf16 (ycf16) from Cyanophora paradoxa.